The primary structure comprises 204 residues: Thiamine-phosphate synthase (204 aa).

4-amino-2-methyl-5-(diphosphooxymethyl)pyrimidine is bound by residues 34–38 (QYRDK) and Asp66. Positions 67 and 86 each coordinate Mg(2+). Position 104 (Ser104) interacts with 4-amino-2-methyl-5-(diphosphooxymethyl)pyrimidine. 131 to 133 (TST) provides a ligand contact to 2-[(2R,5Z)-2-carboxy-4-methylthiazol-5(2H)-ylidene]ethyl phosphate. Lys134 provides a ligand contact to 4-amino-2-methyl-5-(diphosphooxymethyl)pyrimidine. 2-[(2R,5Z)-2-carboxy-4-methylthiazol-5(2H)-ylidene]ethyl phosphate contacts are provided by residues Gly160 and 180–181 (VS).

Belongs to the thiamine-phosphate synthase family. It depends on Mg(2+) as a cofactor.

The enzyme catalyses 2-[(2R,5Z)-2-carboxy-4-methylthiazol-5(2H)-ylidene]ethyl phosphate + 4-amino-2-methyl-5-(diphosphooxymethyl)pyrimidine + 2 H(+) = thiamine phosphate + CO2 + diphosphate. The catalysed reaction is 2-(2-carboxy-4-methylthiazol-5-yl)ethyl phosphate + 4-amino-2-methyl-5-(diphosphooxymethyl)pyrimidine + 2 H(+) = thiamine phosphate + CO2 + diphosphate. It carries out the reaction 4-methyl-5-(2-phosphooxyethyl)-thiazole + 4-amino-2-methyl-5-(diphosphooxymethyl)pyrimidine + H(+) = thiamine phosphate + diphosphate. It participates in cofactor biosynthesis; thiamine diphosphate biosynthesis; thiamine phosphate from 4-amino-2-methyl-5-diphosphomethylpyrimidine and 4-methyl-5-(2-phosphoethyl)-thiazole: step 1/1. Functionally, condenses 4-methyl-5-(beta-hydroxyethyl)thiazole monophosphate (THZ-P) and 2-methyl-4-amino-5-hydroxymethyl pyrimidine pyrophosphate (HMP-PP) to form thiamine monophosphate (TMP). This is Thiamine-phosphate synthase from Picrophilus torridus (strain ATCC 700027 / DSM 9790 / JCM 10055 / NBRC 100828 / KAW 2/3).